Consider the following 337-residue polypeptide: Monoacylglycerol lipase ABHD6 (337 aa).

Topologically, residues 1 to 8 (MDLDVVNM) are extracellular. Residues 9–29 (FVIAGGTLAIPILAFVASFLL) form a helical; Signal-anchor for type II membrane protein membrane-spanning segment. The Cytoplasmic portion of the chain corresponds to 30–337 (WPSALIRIYY…HNPDNNKKLN (308 aa)). The Nucleophile role is filled by Ser-148. Catalysis depends on charge relay system residues Asp-278 and His-306.

It belongs to the AB hydrolase superfamily.

The protein localises to the late endosome membrane. It localises to the lysosome membrane. The protein resides in the mitochondrion membrane. It carries out the reaction Hydrolyzes glycerol monoesters of long-chain fatty acids.. It catalyses the reaction 1-octanoylglycerol + H2O = octanoate + glycerol + H(+). The enzyme catalyses 1-decanoylglycerol + H2O = decanoate + glycerol + H(+). The catalysed reaction is 1-dodecanoylglycerol + H2O = dodecanoate + glycerol + H(+). It carries out the reaction 1-tetradecanoylglycerol + H2O = tetradecanoate + glycerol + H(+). It catalyses the reaction 2-hexadecanoylglycerol + H2O = glycerol + hexadecanoate + H(+). The enzyme catalyses 2-(9Z-octadecenoyl)-glycerol + H2O = glycerol + (9Z)-octadecenoate + H(+). The catalysed reaction is 1-(9Z-octadecenoyl)-glycerol + H2O = glycerol + (9Z)-octadecenoate + H(+). It carries out the reaction 2-(9Z,12Z-octadecadienoyl)-glycerol + H2O = (9Z,12Z)-octadecadienoate + glycerol + H(+). It catalyses the reaction 2-(5Z,8Z,11Z,14Z-eicosatetraenoyl)-glycerol + H2O = glycerol + (5Z,8Z,11Z,14Z)-eicosatetraenoate + H(+). The enzyme catalyses 1-(5Z,8Z,11Z,14Z-eicosatetraenoyl)-glycerol + H2O = glycerol + (5Z,8Z,11Z,14Z)-eicosatetraenoate + H(+). The catalysed reaction is 1-(9Z,12Z-octadecadienoyl)-glycerol + H2O = (9Z,12Z)-octadecadienoate + glycerol + H(+). It carries out the reaction 3-(9Z-octadecenoyl)-sn-glycero-1-phospho-(3'-(9Z-octadecenoyl)-1'-sn-glycerol) + H2O = 3-(9Z-octadecenoyl)-sn-glycero-1-phospho-(1'-sn-glycerol) + (9Z)-octadecenoate + H(+). It catalyses the reaction (S,S)-2-(9Z-octadecenoyl)-sn-glycero-1-phospho-(2'-(9Z-octadecenoyl)-1'-sn-glycerol) + H2O = (S,S)-2-(9Z-octadecenoyl)-sn-glycero-1-phospho-(1'-sn-glycerol) + (9Z)-octadecenoate + H(+). The enzyme catalyses (R,R)-2-(9Z-octadecenoyl)-sn-glycero-3-phospho-(2'-(9Z-octadecenoyl)-3'-sn-glycerol) + H2O = (R,R)-2-(9Z-octadecenoyl)-sn-glycero-3-phospho-(3'-sn-glycerol) + (9Z)-octadecenoate + H(+). Lipase that preferentially hydrolysis medium-chain saturated monoacylglycerols including 2-arachidonoylglycerol. Through 2-arachidonoylglycerol degradation may regulate endocannabinoid signaling pathways. Also has a lysophosphatidyl lipase activity with a preference for lysophosphatidylglycerol among other lysophospholipids. Also able to degrade bis(monoacylglycero)phosphate (BMP) and constitutes the major enzyme for BMP catabolism. BMP, also known as lysobisphosphatidic acid, is enriched in late endosomes and lysosomes and plays a key role in the formation of intraluminal vesicles and in lipid sorting. The chain is Monoacylglycerol lipase ABHD6 from Rattus norvegicus (Rat).